The chain runs to 384 residues: Carbamoyl phosphate synthase small chain (384 aa).

The CPSase stretch occupies residues 1–195; the sequence is MLPVLPPALL…LGRGHGTLAD (195 aa). Residues serine 50, glycine 247, and glycine 249 each contribute to the L-glutamine site. One can recognise a Glutamine amidotransferase type-1 domain in the interval 199 to 384; that stretch reads HVVAYDFGVK…RFVALMQERA (186 aa). Cysteine 275 (nucleophile) is an active-site residue. L-glutamine is bound by residues leucine 276, glutamine 279, asparagine 317, glycine 319, and phenylalanine 320. Active-site residues include histidine 359 and glutamate 361.

Belongs to the CarA family. As to quaternary structure, composed of two chains; the small (or glutamine) chain promotes the hydrolysis of glutamine to ammonia, which is used by the large (or ammonia) chain to synthesize carbamoyl phosphate. Tetramer of heterodimers (alpha,beta)4.

The catalysed reaction is hydrogencarbonate + L-glutamine + 2 ATP + H2O = carbamoyl phosphate + L-glutamate + 2 ADP + phosphate + 2 H(+). It catalyses the reaction L-glutamine + H2O = L-glutamate + NH4(+). It participates in amino-acid biosynthesis; L-arginine biosynthesis; carbamoyl phosphate from bicarbonate: step 1/1. The protein operates within pyrimidine metabolism; UMP biosynthesis via de novo pathway; (S)-dihydroorotate from bicarbonate: step 1/3. In terms of biological role, small subunit of the glutamine-dependent carbamoyl phosphate synthetase (CPSase). CPSase catalyzes the formation of carbamoyl phosphate from the ammonia moiety of glutamine, carbonate, and phosphate donated by ATP, constituting the first step of 2 biosynthetic pathways, one leading to arginine and/or urea and the other to pyrimidine nucleotides. The small subunit (glutamine amidotransferase) binds and cleaves glutamine to supply the large subunit with the substrate ammonia. This is Carbamoyl phosphate synthase small chain from Rubrivivax gelatinosus (strain NBRC 100245 / IL144).